The primary structure comprises 129 residues: MDNVDFSKDIRDYSGLELAFLGDAIWELEIRKYYLQFGYNIPTLNKYVKAKVNAKYQSLIYKKIINDLDEEFKVIGKRAKNSNIKTFPRSCTVMEYKEATALEAIIGAMYLLKKEEEIKKIINIVIKGE.

The active site involves D23.

This sequence belongs to the MrnC RNase family.

In terms of biological role, might be a ribonuclease involved in RNA processing. The protein is Mini-ribonuclease 3-like protein (mrnCL) of Fusobacterium nucleatum subsp. nucleatum (strain ATCC 25586 / DSM 15643 / BCRC 10681 / CIP 101130 / JCM 8532 / KCTC 2640 / LMG 13131 / VPI 4355).